We begin with the raw amino-acid sequence, 70 residues long: U-scoloptoxin(04)-Er3a (70 aa).

The N-terminal stretch at 1-24 is a signal peptide; sequence MAAIRNLLILTMLLIVCVSWNADA.

It belongs to the scoloptoxin-04 family. Post-translationally, contains 2 disulfide bonds. As to expression, expressed by the venom gland.

The protein localises to the secreted. The chain is U-scoloptoxin(04)-Er3a from Ethmostigmus rubripes (Giant centipede).